A 309-amino-acid polypeptide reads, in one-letter code: NAD kinase (309 aa).

The active-site Proton acceptor is aspartate 89. NAD(+) is bound by residues 89 to 90 (DG), 163 to 164 (NE), histidine 174, arginine 191, aspartate 193, and 204 to 209 (TAYSLS).

This sequence belongs to the NAD kinase family. It depends on a divalent metal cation as a cofactor.

The protein localises to the cytoplasm. It carries out the reaction NAD(+) + ATP = ADP + NADP(+) + H(+). In terms of biological role, involved in the regulation of the intracellular balance of NAD and NADP, and is a key enzyme in the biosynthesis of NADP. Catalyzes specifically the phosphorylation on 2'-hydroxyl of the adenosine moiety of NAD to yield NADP. In Shewanella piezotolerans (strain WP3 / JCM 13877), this protein is NAD kinase.